A 469-amino-acid chain; its full sequence is 3-isopropylmalate dehydratase large subunit (469 aa).

The [4Fe-4S] cluster site is built by Cys-350, Cys-410, and Cys-413.

The protein belongs to the aconitase/IPM isomerase family. LeuC type 1 subfamily. As to quaternary structure, heterodimer of LeuC and LeuD. It depends on [4Fe-4S] cluster as a cofactor.

The catalysed reaction is (2R,3S)-3-isopropylmalate = (2S)-2-isopropylmalate. It participates in amino-acid biosynthesis; L-leucine biosynthesis; L-leucine from 3-methyl-2-oxobutanoate: step 2/4. Functionally, catalyzes the isomerization between 2-isopropylmalate and 3-isopropylmalate, via the formation of 2-isopropylmaleate. In Mesorhizobium japonicum (strain LMG 29417 / CECT 9101 / MAFF 303099) (Mesorhizobium loti (strain MAFF 303099)), this protein is 3-isopropylmalate dehydratase large subunit.